A 353-amino-acid polypeptide reads, in one-letter code: Photosystem II protein D1 (353 aa).

An N-acetylthreonine modification is found at Thr2. Thr2 carries the phosphothreonine modification. The next 3 membrane-spanning stretches (helical) occupy residues 29–46, 118–133, and 142–156; these read YIGW…TATS, HFFI…EWEL, and WIAV…AATA. Chlorophyll a is bound at residue His118. Tyr126 serves as a coordination point for pheophytin a. The [CaMn4O5] cluster site is built by Asp170 and Glu189. A helical membrane pass occupies residues 197 to 218; sequence FHMLGVAGVFGGSLFSAMHGSL. A chlorophyll a-binding site is contributed by His198. Residues His215 and 264–265 each bind a quinone; that span reads SF. His215 contributes to the Fe cation binding site. His272 is a Fe cation binding site. The helical transmembrane segment at 274–288 threads the bilayer; that stretch reads FLAAWPVIGIWFTAL. His332, Glu333, Asp342, and Ala344 together coordinate [CaMn4O5] cluster. A propeptide spanning residues 345–353 is cleaved from the precursor; sequence AFEAPSINA.

Belongs to the reaction center PufL/M/PsbA/D family. As to quaternary structure, PSII is composed of 1 copy each of membrane proteins PsbA, PsbB, PsbC, PsbD, PsbE, PsbF, PsbH, PsbI, PsbJ, PsbK, PsbL, PsbM, PsbT, PsbX, PsbY, PsbZ, Psb30/Ycf12, at least 3 peripheral proteins of the oxygen-evolving complex and a large number of cofactors. It forms dimeric complexes. The D1/D2 heterodimer binds P680, chlorophylls that are the primary electron donor of PSII, and subsequent electron acceptors. It shares a non-heme iron and each subunit binds pheophytin, quinone, additional chlorophylls, carotenoids and lipids. D1 provides most of the ligands for the Mn4-Ca-O5 cluster of the oxygen-evolving complex (OEC). There is also a Cl(-1) ion associated with D1 and D2, which is required for oxygen evolution. The PSII complex binds additional chlorophylls, carotenoids and specific lipids. serves as cofactor. Tyr-161 forms a radical intermediate that is referred to as redox-active TyrZ, YZ or Y-Z. In terms of processing, C-terminally processed by CTPA; processing is essential to allow assembly of the oxygen-evolving complex and thus photosynthetic growth.

Its subcellular location is the plastid. The protein resides in the chloroplast thylakoid membrane. It carries out the reaction 2 a plastoquinone + 4 hnu + 2 H2O = 2 a plastoquinol + O2. Photosystem II (PSII) is a light-driven water:plastoquinone oxidoreductase that uses light energy to abstract electrons from H(2)O, generating O(2) and a proton gradient subsequently used for ATP formation. It consists of a core antenna complex that captures photons, and an electron transfer chain that converts photonic excitation into a charge separation. The D1/D2 (PsbA/PsbD) reaction center heterodimer binds P680, the primary electron donor of PSII as well as several subsequent electron acceptors. The sequence is that of Photosystem II protein D1 from Chlamydomonas moewusii (Chlamydomonas eugametos).